The primary structure comprises 689 residues: MSKRVYEIAKELDLDTKEVIGRLNAAGIEVKNHFATVEDPDYERVFGGGNGRSEAGEERGRKGRQKKRRRVVIDASATNRGPRAAAPSRPSRGRGAAREEAPAAEEREAPEVVRVEPGATVRDLGEALGVPPTRIIQILMGLGEMKTVTQTLSTEEIELVAEELGRRVEVGALEEPAPEEIGPEDSPEDLVEKPPVITVMGHVDHGKTSLLDRIRRTNVVSGEAGGITQHIGAYQVEHEGRRITFIDTPGHEAFTEMRARGARVTDIVVLVVAADDGVMPQTEEAIEHARAAGVPIVVAINKIDVPNANPDRVMGELAERGLTPEQWGGETVTVPVSAKTGEGIEDLLENILVVAELEELRANPKAPASGYVIESRLDPGRGPVATLLLNRGTLHRGDVVLAGTAYGRVRAMFDYTGQRIKEAGPGTPVEILGLSGVPEAGTRFEVAENERAARSRAQQAEERLRRQELAASGPRRTTLEELLGEGGAEELNLVVKADVAGSVEALKEALAKLSTDEVRVNVVRSGVGAVTDSDIMLASASGGIVIGFNVRPTNTAKQVAEREGVEIRTYDVIYKVIEEIEAAMKGMLAPETAERETATAEVRATFRVPNVGTVAGCYVTSGEIRRNNRVRVVRDGTVVYDGQIASLKRFKDDVRTVREGFECGVGIENFNDVKEGDVLEFYEVVEIPR.

Residues 41–109 (DYERVFGGGN…EAPAAEEREA (69 aa)) are disordered. Residues 61 to 70 (RKGRQKKRRR) are compositionally biased toward basic residues. Positions 80–94 (RGPRAAAPSRPSRGR) are enriched in low complexity. Over residues 96 to 109 (AAREEAPAAEEREA) the composition is skewed to basic and acidic residues. One can recognise a tr-type G domain in the interval 192-361 (EKPPVITVMG…LVVAELEELR (170 aa)). Residues 201 to 208 (GHVDHGKT) form a G1 region. 201-208 (GHVDHGKT) is a binding site for GTP. The G2 stretch occupies residues 226–230 (GITQH). The G3 stretch occupies residues 247 to 250 (DTPG). GTP is bound by residues 247–251 (DTPGH) and 301–304 (NKID). Residues 301 to 304 (NKID) are G4. The segment at 337–339 (SAK) is G5.

The protein belongs to the TRAFAC class translation factor GTPase superfamily. Classic translation factor GTPase family. IF-2 subfamily.

The protein resides in the cytoplasm. One of the essential components for the initiation of protein synthesis. Protects formylmethionyl-tRNA from spontaneous hydrolysis and promotes its binding to the 30S ribosomal subunits. Also involved in the hydrolysis of GTP during the formation of the 70S ribosomal complex. This chain is Translation initiation factor IF-2, found in Rubrobacter xylanophilus (strain DSM 9941 / JCM 11954 / NBRC 16129 / PRD-1).